Here is a 132-residue protein sequence, read N- to C-terminus: Large-conductance mechanosensitive channel (132 aa).

Helical transmembrane passes span 14-34, 38-58, and 67-87; these read VVDLAVGVVIGAAFGKIVSSL, IITPLLGMVLGGVDFTSLHFG, and GNFIQTIFDFLIIAASIFMFV.

Belongs to the MscL family. As to quaternary structure, homopentamer.

It is found in the cell membrane. Its function is as follows. Channel that opens in response to stretch forces in the membrane lipid bilayer. May participate in the regulation of osmotic pressure changes within the cell. This chain is Large-conductance mechanosensitive channel, found in Bacillus cereus (strain B4264).